Reading from the N-terminus, the 159-residue chain is Large ribosomal subunit protein eL24 (159 aa).

The tract at residues 118-159 is disordered; sequence ANKAVRAAKAAANKEKKASQPKTQQKTAKNVKTAAPRVGGKR. Over residues 137 to 147 the composition is skewed to polar residues; the sequence is QPKTQQKTAKN.

The protein belongs to the eukaryotic ribosomal protein eL24 family.

This Caenorhabditis elegans protein is Large ribosomal subunit protein eL24.